Reading from the N-terminus, the 178-residue chain is Cytidylate kinase (178 aa).

7 to 15 provides a ligand contact to ATP; sequence GLPGTGTTT.

It belongs to the cytidylate kinase family. Type 2 subfamily.

The protein resides in the cytoplasm. It carries out the reaction CMP + ATP = CDP + ADP. The enzyme catalyses dCMP + ATP = dCDP + ADP. This chain is Cytidylate kinase, found in Methanococcus maripaludis (strain DSM 14266 / JCM 13030 / NBRC 101832 / S2 / LL).